A 291-amino-acid polypeptide reads, in one-letter code: 29 kDa ribonucleoprotein B, chloroplastic (291 aa).

The 79-residue stretch at 87–165 (LKLFVGNLPF…RAIRVNAGPA (79 aa)) folds into the RRM 1 domain. The tract at residues 164–202 (PAPAKRENSSFGGGRGGNSSYGGGRDGNSSFGGARGGRS) is disordered. A linker (Gly-rich) region spans residues 166–206 (PAKRENSSFGGGRGGNSSYGGGRDGNSSFGGARGGRSVDSS). The segment covering 174 to 189 (FGGGRGGNSSYGGGRD) has biased composition (gly residues). The 79-residue stretch at 207-285 (NRVYVGNLSW…RSIRVSAAEE (79 aa)) folds into the RRM 2 domain.

Its subcellular location is the plastid. It localises to the chloroplast. In terms of biological role, could be involved in splicing and/or processing of chloroplast RNA's. The chain is 29 kDa ribonucleoprotein B, chloroplastic from Nicotiana sylvestris (Wood tobacco).